A 424-amino-acid polypeptide reads, in one-letter code: G1/S-specific cyclin-E (424 aa).

The tract at residues 1–25 (MSRRSGRLQSRQDNQPLTECISDEN) is disordered. Polar residues predominate over residues 7–17 (RLQSRQDNQPL). Position 411 is a phosphothreonine (Thr411).

The protein belongs to the cyclin family. Cyclin E subfamily. As to quaternary structure, interacts with a member of the CDK2/CDK protein kinases to form a serine/threonine kinase holoenzyme complex. The cyclin subunit imparts substrate specificity to the complex.

Its subcellular location is the nucleus. Essential for the control of the cell cycle at the G1/S (start) transition. The polypeptide is G1/S-specific cyclin-E (CYCE) (Hemicentrotus pulcherrimus (Sea urchin)).